The primary structure comprises 593 residues: ETS-related transcription factor Elf-2 (593 aa).

At Ser107 the chain carries Phosphoserine. Residues 146–201 (VEVSTEESEPMDTSPIPTSPDSHEPMKKKKVGRKPKTQQSPISNGSPELGIKKKPR) are disordered. The span at 171-181 (MKKKKVGRKPK) shows a compositional bias: basic residues. The residue at position 182 (Thr182) is a Phosphothreonine. A compositionally biased stretch (polar residues) spans 182 to 191 (TQQSPISNGS). Phosphoserine is present on residues Ser185 and Ser191. The ETS DNA-binding region spans 208–290 (TYLWEFLLDL…EGQRLVYQFK (83 aa)). Phosphoserine occurs at positions 363 and 372. Thr376 is subject to Phosphothreonine. Position 430 is a phosphoserine (Ser430). Omega-N-methylarginine is present on Arg494. Thr521 carries the phosphothreonine modification. Lys536 is covalently cross-linked (Glycyl lysine isopeptide (Lys-Gly) (interchain with G-Cter in SUMO2)).

The protein belongs to the ETS family. Interacts with the LIM domains of LMO2. Interacts via its N-terminal region with RUNX1. In terms of tissue distribution, expressed in all fetal and adult tissues examined. Among fetal tissues, highest levels of expression detected in heart, lung, liver and kidney, and lower levels in brain. Among adult tissues, highest levels of expression detected in heart, placenta, lung, skeletal muscle, spleen, thymus, testis and ovary. Moderate expression in prostate, small intestine, kidney, liver and pancreas, and weak expression in colon, brain and peripheral blood lymphocytes.

Its subcellular location is the nucleus. Its function is as follows. Isoform 1 transcriptionally activates the LYN and BLK promoters and acts synergistically with RUNX1 to transactivate the BLK promoter. Isoform 2 may function in repression of RUNX1-mediated transactivation. The polypeptide is ETS-related transcription factor Elf-2 (Homo sapiens (Human)).